A 131-amino-acid polypeptide reads, in one-letter code: MAEPDYIEDDNPELIRPQKLINPVKSSRNHQDLHRELLMNQKRGLAPQNKPELQKVMEKRRRDQVIKQKEEEAQKKKSDLEIELLKRQQKLEQLELEKQKLQEEQENAPEFVKVKGNLRRTGQEVAQAQES.

Ala2 bears the N-acetylalanine mark. A disordered region spans residues Met39 to Asp79. Residue Lys50 is modified to N6-acetyllysine. Positions Glu52 to Asp79 are enriched in basic and acidic residues. Residues Arg61–Val112 are a coiled coil.

Belongs to the FAM107 family. As to expression, expressed in the hippocampus and hypothalamus. Expressed in the pontine nuclei and reticulotegmental nucleus. Expressed in Purkinje cell and nuclear layers of the cerebelum. Expressed in the choroid plexus. Expressed in hippocampal granule neurons of the dente gyrus.

The chain is Protein FAM107B from Mus musculus (Mouse).